A 275-amino-acid chain; its full sequence is Large ribosomal subunit protein uL2c (275 aa).

Disordered stretches follow at residues 1–30 (MAIH…QKQK) and 225–275 (MNPV…RRRK). Positions 21-30 (QAKSTPQKQK) are enriched in polar residues.

It belongs to the universal ribosomal protein uL2 family. As to quaternary structure, part of the 50S ribosomal subunit.

It localises to the plastid. The protein resides in the chloroplast. The chain is Large ribosomal subunit protein uL2c (rpl2) from Illicium oligandrum (Star anise).